Consider the following 126-residue polypeptide: MFS14 protein (126 aa).

The segment at residues 1 to 23 is a signal peptide (or 24, or 26); it reads MALEAATAPRALLAACLVLLVLG.

Enhanced expression in male flowers. Accumulates in the tapetum.

The polypeptide is MFS14 protein (MFS14) (Zea mays (Maize)).